Reading from the N-terminus, the 643-residue chain is uncharacterized protein (643 aa).

Residues 179–199 (FKSSQLQQSPSPNKKSPSYSQ) show a composition bias toward low complexity. Disordered stretches follow at residues 179–200 (FKSS…YSQV) and 349–377 (KRSN…STEN).

This is an uncharacterized protein from Caenorhabditis elegans.